The chain runs to 219 residues: Ribose-5-phosphate isomerase A (219 aa).

Substrate-binding positions include 28–31 (TGST), 81–84 (DGAD), and 94–97 (KGGG). The active-site Proton acceptor is the glutamate 103. Lysine 121 provides a ligand contact to substrate.

It belongs to the ribose 5-phosphate isomerase family. In terms of assembly, homodimer.

The enzyme catalyses aldehydo-D-ribose 5-phosphate = D-ribulose 5-phosphate. The protein operates within carbohydrate degradation; pentose phosphate pathway; D-ribose 5-phosphate from D-ribulose 5-phosphate (non-oxidative stage): step 1/1. Its function is as follows. Catalyzes the reversible conversion of ribose-5-phosphate to ribulose 5-phosphate. This chain is Ribose-5-phosphate isomerase A, found in Methylibium petroleiphilum (strain ATCC BAA-1232 / LMG 22953 / PM1).